We begin with the raw amino-acid sequence, 277 residues long: Undecaprenyl-diphosphatase 1 (277 aa).

Helical transmembrane passes span 1 to 21 (MSLL…FLPI), 39 to 58 (AGFS…VILY), 85 to 105 (FWFA…GILF), 113 to 133 (FKAP…LIII), 147 to 167 (MTIW…IPGL), 191 to 211 (SFLL…DDLI), 226 to 246 (ASFV…LNLV), and 251 to 271 (LVYF…FQDA).

Belongs to the UppP family.

Its subcellular location is the cell membrane. It catalyses the reaction di-trans,octa-cis-undecaprenyl diphosphate + H2O = di-trans,octa-cis-undecaprenyl phosphate + phosphate + H(+). Functionally, catalyzes the dephosphorylation of undecaprenyl diphosphate (UPP). Confers resistance to bacitracin. The protein is Undecaprenyl-diphosphatase 1 of Shouchella clausii (strain KSM-K16) (Alkalihalobacillus clausii).